The chain runs to 688 residues: Elongation factor G (688 aa).

The 275-residue stretch at 8-282 (EKFRNIGIMA…AVVDFMPSPL (275 aa)) folds into the tr-type G domain. GTP contacts are provided by residues 17-24 (AHIDAGKT), 81-85 (DTPGH), and 135-138 (NKMD). The segment at 282–305 (LDIPPIKGTDPETGEETDRPADDN) is disordered.

It belongs to the TRAFAC class translation factor GTPase superfamily. Classic translation factor GTPase family. EF-G/EF-2 subfamily.

It localises to the cytoplasm. In terms of biological role, catalyzes the GTP-dependent ribosomal translocation step during translation elongation. During this step, the ribosome changes from the pre-translocational (PRE) to the post-translocational (POST) state as the newly formed A-site-bound peptidyl-tRNA and P-site-bound deacylated tRNA move to the P and E sites, respectively. Catalyzes the coordinated movement of the two tRNA molecules, the mRNA and conformational changes in the ribosome. The sequence is that of Elongation factor G from Clostridium kluyveri (strain NBRC 12016).